Consider the following 782-residue polypeptide: Small RNA degrading nuclease 3 (782 aa).

Residues 145–296 form the Exonuclease domain; the sequence is MLSIDCEMVT…HDAAAAMKLV (152 aa). An RRM 1 domain is found at 331 to 410; the sequence is AQLFLHKIPH…KKAVLKLSSG (80 aa). The disordered stretch occupies residues 426 to 464; it reads PCEISTSERARAEENNVSSKRQKTEDETEETKEATVNQR. The RRM 2 domain occupies 469–549; that stretch reads TKLFLHKIPH…KMVVFKLSSG (81 aa). Residues 563-605 are disordered; that stretch reads DSPGEISTTKRARTEESNMSSKRQKTEDESEETKEANAKQREA. Residues 577-605 adopt a coiled-coil conformation; that stretch reads EESNMSSKRQKTEDESEETKEANAKQREA. Basic and acidic residues predominate over residues 595-605; sequence TKEANAKQREA. The RRM 3 domain maps to 608-688; the sequence is TKLLLHKIPL…KMVAFKLSSG (81 aa). A coiled-coil region spans residues 709 to 779; that stretch reads ANANHCEDDH…KMKLEKKQSK (71 aa).

Belongs to the REXO1/REXO3 family. As to quaternary structure, associated with the Mediator complex.

It localises to the nucleus. Its function is as follows. 3'-5' exonuclease degrading single-stranded small RNAs. The protein is Small RNA degrading nuclease 3 (SDN3) of Arabidopsis thaliana (Mouse-ear cress).